Consider the following 386-residue polypeptide: Galactokinase (386 aa).

35–38 (EHTD) lines the substrate pocket. Residues Ser69 and 125–131 (GAGLSSS) each bind ATP. Mg(2+) contacts are provided by Ser131 and Glu163. Asp175 functions as the Proton acceptor in the catalytic mechanism. Tyr224 serves as a coordination point for substrate.

Belongs to the GHMP kinase family. GalK subfamily.

Its subcellular location is the cytoplasm. The catalysed reaction is alpha-D-galactose + ATP = alpha-D-galactose 1-phosphate + ADP + H(+). It functions in the pathway carbohydrate metabolism; galactose metabolism. Catalyzes the transfer of the gamma-phosphate of ATP to D-galactose to form alpha-D-galactose-1-phosphate (Gal-1-P). The protein is Galactokinase of Vibrio vulnificus (strain CMCP6).